Reading from the N-terminus, the 454-residue chain is Allantoinase (454 aa).

Zn(2+)-binding residues include His59, His61, Lys150, His190, His246, and Asp319. Lys150 is subject to N6-carboxylysine.

The protein belongs to the metallo-dependent hydrolases superfamily. Allantoinase family. In terms of assembly, homotetramer. Requires Zn(2+) as cofactor. Carboxylation allows a single lysine to coordinate two zinc ions.

The enzyme catalyses (S)-allantoin + H2O = allantoate + H(+). Its pathway is nitrogen metabolism; (S)-allantoin degradation; allantoate from (S)-allantoin: step 1/1. Catalyzes the conversion of allantoin (5-ureidohydantoin) to allantoic acid by hydrolytic cleavage of the five-member hydantoin ring. This chain is Allantoinase, found in Bacillus licheniformis (strain ATCC 14580 / DSM 13 / JCM 2505 / CCUG 7422 / NBRC 12200 / NCIMB 9375 / NCTC 10341 / NRRL NRS-1264 / Gibson 46).